A 227-amino-acid chain; its full sequence is Uracil-DNA glycosylase (227 aa).

The active-site Proton acceptor is Asp68.

This sequence belongs to the uracil-DNA glycosylase (UDG) superfamily. UNG family.

The protein localises to the cytoplasm. The catalysed reaction is Hydrolyzes single-stranded DNA or mismatched double-stranded DNA and polynucleotides, releasing free uracil.. In terms of biological role, excises uracil residues from the DNA which can arise as a result of misincorporation of dUMP residues by DNA polymerase or due to deamination of cytosine. The polypeptide is Uracil-DNA glycosylase (Mycolicibacterium smegmatis (strain ATCC 700084 / mc(2)155) (Mycobacterium smegmatis)).